Here is a 256-residue protein sequence, read N- to C-terminus: Ribonuclease HII (256 aa).

The 189-residue stretch at 67–255 (QLVGGVDEVG…VSEMVGLKKA (189 aa)) folds into the RNase H type-2 domain. Residues Asp-73, Glu-74, and Asp-165 each coordinate a divalent metal cation.

This sequence belongs to the RNase HII family. It depends on Mn(2+) as a cofactor. Requires Mg(2+) as cofactor.

Its subcellular location is the cytoplasm. It catalyses the reaction Endonucleolytic cleavage to 5'-phosphomonoester.. Its function is as follows. Endonuclease that specifically degrades the RNA of RNA-DNA hybrids. This is Ribonuclease HII from Lactobacillus delbrueckii subsp. bulgaricus (strain ATCC 11842 / DSM 20081 / BCRC 10696 / JCM 1002 / NBRC 13953 / NCIMB 11778 / NCTC 12712 / WDCM 00102 / Lb 14).